A 192-amino-acid polypeptide reads, in one-letter code: MDGSGEQPRGGGPTSSEQIMKTGALLLQGFIQDRAGRMGGETPELGLEQVPQDASTKKLSECLKRIGDELDSNMELQRMIAAVDTDSPREVFFRVAAEMFSDGNFNWGRVVALFYFASKLVLKALCTKVPELIRTIMGWTLDFLRERLLGWIQDQGGWDGLLSYFGTPTWQTVTIFVAGVLTASLTIWKKMG.

Met1 is subject to N-acetylmethionine. A BH3 motif is present at residues 59-73; it reads LSECLKRIGDELDSN. The BH1 motif lies at 98–118; sequence EMFSDGNFNWGRVVALFYFAS. Lys128 participates in a covalent cross-link: Glycyl lysine isopeptide (Lys-Gly) (interchain with G-Cter in ubiquitin). The short motif at 150–165 is the BH2 element; that stretch reads GWIQDQGGWDGLLSYF. A helical transmembrane segment spans residues 172–192; the sequence is TVTIFVAGVLTASLTIWKKMG. Lys190 is covalently cross-linked (Glycyl lysine isopeptide (Lys-Gly) (interchain with G-Cter in ubiquitin)).

This sequence belongs to the Bcl-2 family. Homodimer. Forms higher oligomers under stress conditions. Forms heterooligomers with BAK. Interacts with BCL2L11. Interaction with BCL2L11 promotes BAX oligomerization and association with mitochondrial membranes, with subsequent release of cytochrome c. Forms heterodimers with BCL2, BCL2L1 isoform Bcl-X(L), BCL2L2, MCL1 and A1. Interacts with SH3GLB1. Interacts with SFN and YWHAZ; the interaction occurs in the cytoplasm. Under stress conditions, JNK-mediated phosphorylation of SFN and YWHAZ, releases BAX to mitochondria. Interacts with RNF144B, which regulates the ubiquitin-dependent stability of BAX. Interacts with CLU under stress conditions that cause a conformation change leading to BAX oligomerization and association with mitochondria. Does not interact with CLU in unstressed cells. Interacts with FAIM2/LFG2. Interacts with RTL10/BOP. Interacts (via a C-terminal 33 residues) with NOL3 (via CARD domain); inhibits BAX activation and translocation and consequently cytochrome c release from mitochondria. Interacts with GIMAP3/IAN4 and GIMAP5/IAN5; this interaction is increased, when cells initiate apoptosis upon IL2 withdrawal. Interacts with IRF3; the interaction is direct, increases upon Sendai virus infection and mediates the formation of the apoptosis complex TOMM70:HSP90AA1:IRF3:BAX. Interacts with MOAP1, facilitating BAX-dependent mitochondrial outer membrane permeabilization and apoptosis. Interacts with BCL2L10/BCL-B. Interacts with non-acetylated XRCC6/Ku70; this interaction leads to BAX sequestration in the cytosol, away from the mitochondria, preventing BAX-mediated apoptosis. In terms of processing, ubiquitinated in the absence of XRCC6/Ku70. Ubiquitinated on Lys-128 and Lys-190. 'Lys-63'-linked polyubiquitin chains on Lys-128 are removed by USP12.

The protein localises to the mitochondrion outer membrane. The protein resides in the cytoplasm. It is found in the nucleus. Functionally, plays a role in the mitochondrial apoptotic process. Under normal conditions, BAX is largely cytosolic via constant retrotranslocation from mitochondria to the cytosol mediated by BCL2L1/Bcl-xL, which avoids accumulation of toxic BAX levels at the mitochondrial outer membrane (MOM). Under stress conditions, undergoes a conformation change that causes translocation to the mitochondrion membrane, leading to the release of cytochrome c that then triggers apoptosis. Promotes activation of CASP3, and thereby apoptosis. The chain is Apoptosis regulator BAX (BAX) from Bos taurus (Bovine).